The following is a 317-amino-acid chain: Acetyl-coenzyme A carboxylase carboxyl transferase subunit alpha (317 aa).

The CoA carboxyltransferase C-terminal domain maps to 41 to 291; sequence KVDKLLRSTY…SMALDSALRD (251 aa).

The protein belongs to the AccA family. As to quaternary structure, acetyl-CoA carboxylase is a heterohexamer composed of biotin carboxyl carrier protein (AccB), biotin carboxylase (AccC) and two subunits each of ACCase subunit alpha (AccA) and ACCase subunit beta (AccD).

It localises to the cytoplasm. It carries out the reaction N(6)-carboxybiotinyl-L-lysyl-[protein] + acetyl-CoA = N(6)-biotinyl-L-lysyl-[protein] + malonyl-CoA. It participates in lipid metabolism; malonyl-CoA biosynthesis; malonyl-CoA from acetyl-CoA: step 1/1. Its function is as follows. Component of the acetyl coenzyme A carboxylase (ACC) complex. First, biotin carboxylase catalyzes the carboxylation of biotin on its carrier protein (BCCP) and then the CO(2) group is transferred by the carboxyltransferase to acetyl-CoA to form malonyl-CoA. This chain is Acetyl-coenzyme A carboxylase carboxyl transferase subunit alpha, found in Paramagnetospirillum magneticum (strain ATCC 700264 / AMB-1) (Magnetospirillum magneticum).